Here is a 351-residue protein sequence, read N- to C-terminus: Probable aldo-keto reductase 2 (351 aa).

Residue Y67 is the Proton donor of the active site. Residue H134 coordinates substrate. Position 213 to 223 (S213 to G223) interacts with NADP(+). Positions Y317–Q351 are disordered. A compositionally biased stretch (polar residues) spans M332–Q351.

This sequence belongs to the aldo/keto reductase family.

The sequence is that of Probable aldo-keto reductase 2 from Oryza sativa subsp. indica (Rice).